The primary structure comprises 200 residues: Small ribosomal subunit protein uS4 (200 aa).

In terms of domain architecture, S4 RNA-binding spans 91–150 (TRLDNVVYRLGITPTRRSARQLVSHKHITVNGKIVNIPSYALKVGDIIGLTEKTKSSNAI).

The protein belongs to the universal ribosomal protein uS4 family. Part of the 30S ribosomal subunit. Contacts protein S5. The interaction surface between S4 and S5 is involved in control of translational fidelity.

Functionally, one of the primary rRNA binding proteins, it binds directly to 16S rRNA where it nucleates assembly of the body of the 30S subunit. Its function is as follows. With S5 and S12 plays an important role in translational accuracy. The protein is Small ribosomal subunit protein uS4 of Amoebophilus asiaticus (strain 5a2).